Here is a 103-residue protein sequence, read N- to C-terminus: Protamine-2 (103 aa).

The interval 1–103 (MVRYRMRSLS…RTRRRRCRRY (103 aa)) is disordered. 2 positions are modified to phosphoserine: serine 8 and serine 10. Over residues 8 to 17 (SLSERPHEVH) the composition is skewed to basic and acidic residues. Over residues 23–35 (GQEQGHNGQEEQG) the composition is skewed to low complexity. Residue serine 37 is modified to Phosphoserine. Residues 39–48 (EHVEVYERTH) show a composition bias toward basic and acidic residues. Residues 51-103 (YSHHRRRRCSRRRLYRIHRRRHRSCRRRRRRSCRHRRRHRRGCRTRRRRCRRY) show a composition bias toward basic residues.

It belongs to the protamine P2 family. In terms of assembly, interacts with TDRP. Post-translationally, proteolytic processing into mature chains is required for histone eviction during spermatogenesis. Transition proteins (TNP1 and TNP2) are required for processing. Testis.

Its subcellular location is the nucleus. It is found in the chromosome. Protamines substitute for histones in the chromatin of sperm during the haploid phase of spermatogenesis. They compact sperm DNA into a highly condensed, stable and inactive complex. The sequence is that of Protamine-2 (PRM2) from Semnopithecus entellus (Northern plains gray langur).